Here is a 1323-residue protein sequence, read N- to C-terminus: MVLTLGESWPVLVGKRFLSLSAAEGNEGGQDNWDLERVAEWPWLSGTIRAVSHTDVTKKDLKVCVEFDGESWRKRRWIDVYSLQRKAFLVEHNLVLAERKSPEVPEQVIQWPAIMYKSLLDKAGLGAITSVRFLGDQQSVFVSKDLLKPIQDVNSLRLSLTDNQTVSKEFQALIVKHLDESHLLQGDKNLVGSEVKIYSLDPSTQWFSATVVHGNPSSKTLQVNCEEIPALKIVDPALIHVEVVHDNFVTCGNSTRTGAVKRKSSENNGSSVSKQAKSCSEASPSMCPVQSVPTTVFKEILLGCTAATPSSKDPRQQNTPQAANSPPNIGAKLPQGCHKQNLPEELSSCLNTKPEVPRTKPDVCKEGLLSSKSSQVGAGDLKILSEPKGSCIQPKTNTDQESRLESAPQPVTGLPKECLPAKTSSKAELDIATTPELQKHLEHAASTSDDLSDKPEVKAGVTSLNSCAEKKVEPSHLGSQSQNLKETSVKVDNESCCTRSSNKTQTPPARKSVLTDPDKVRKLQQSGEAFVQDDSCVNIVAQLPKCRECRLDSLRKDKDQQKDSPVFCRFFHFRRLQFNKHGVLRVEGFLTPNKYDSEAIGLWLPLTKNVVGTDLDTAKYILANIGDHFCQMVISEKEAMSTIEPHRQVAWKRAVKGVREMCDVCDTTIFNLHWVCPRCGFGVCVDCYRMKRKNCQQGAAYKTFSWIRCVKSQIHEPENLMPTQIIPGKALYDVGDIVHSVRAKWGIKANCPCSNRQFKLFSKPALKEDLKQTSLSGEKPTLGTMVQQSSPVLEPVAVCGEAASKPASSVKPTCPTSTSPLNWLADLTSGNVNKENKEKQLTMPILKNEIKCLPPLPPLNKPSTVLHTFNSTILTPVSNNNSGFLRNLLNSSTAKTENGLKNTPKILDDIFASLVQNKTSSDSSKRPQGLTIKPSILGFDTPHYWLCDNRLLCLQDPNNKSNWNVFRECWKQGQPVMVSGVHHKLNTELWKPESFRKEFGEQEVDLVNCRTNEIITGATVGDFWDGFEDVPNRLKNDKEKEPMVLKLKDWPPGEDFRDMMPSRFDDLMANIPLPEYTRRDGKLNLASRLPNYFVRPDLGPKMYNAYGLITPEDRKYGTTNLHLDVSDAANVMVYVGIPKGQCEQEEEVLRTIQDGDSDELTIKRFIEGKEKPGALWHIYAAKDTEKIREFLKKVSEEQGQDNPADHDPIHDQSWYLDRSLRKRLYQEYGVQGWAIVQFLGDVVFIPAGAPHQVHNLYSCIKVAEDFVSPEHVKHCFWLTQEFRYLSQTHTNHEDKLQVKNVIYHAVKDAVAMLKASESSLGKP.

Disordered stretches follow at residues 255–287 (TRTG…PSMC), 307–337 (ATPS…PQGC), and 385–416 (SEPK…GLPK). Phosphoserine is present on S264. Polar residues-rich tracts occupy residues 266–283 (ENNG…SEAS) and 307–327 (ATPS…NSPP). S325 carries the phosphoserine modification. Phosphoserine is present on S446. Disordered regions lie at residues 468 to 487 (AEKK…LKET) and 495 to 517 (SCCT…LTDP). 2 stretches are compositionally biased toward polar residues: residues 477 to 486 (LGSQSQNLKE) and 495 to 507 (SCCT…TQTP). A C6-type zinc finger spans residues 662–687 (CDVCDTTIFNLHWVCPRCGFGVCVDC). Positions 885–889 (LRNLL) match the LXXLL motif motif. N6-acetyllysine is present on K895. Positions 1060-1283 (MPSRFDDLMA…HCFWLTQEFR (224 aa)) constitute a JmjC domain. Fe cation-binding residues include H1122, D1124, and H1251.

This sequence belongs to the JHDM2 histone demethylase family. Interacts with VRK1. It depends on Fe(2+) as a cofactor. Highly expressed in testis (at protein level). Also expressed at high levels in tissues responsive to sympathetic nerve activity such as brown adipose tissue and skeletal muscle.

Its subcellular location is the cytoplasm. It is found in the nucleus. The catalysed reaction is N(6),N(6)-dimethyl-L-lysyl(9)-[histone H3] + 2 2-oxoglutarate + 2 O2 = L-lysyl(9)-[histone H3] + 2 formaldehyde + 2 succinate + 2 CO2. Functionally, histone demethylase that specifically demethylates 'Lys-9' of histone H3, thereby playing a central role in histone code. Preferentially demethylates mono- and dimethylated H3 'Lys-9' residue, with a preference for dimethylated residue, while it has weak or no activity on trimethylated H3 'Lys-9'. Demethylation of Lys residue generates formaldehyde and succinate. Involved in hormone-dependent transcriptional activation, by participating in recruitment to androgen-receptor target genes, resulting in H3 'Lys-9' demethylation and transcriptional activation. Involved in spermatogenesis by regulating expression of target genes such as PRM1 and TNP1 which are required for packaging and condensation of sperm chromatin. Involved in obesity resistance through regulation of metabolic genes such as PPARA and UCP1. The polypeptide is Lysine-specific demethylase 3A (Kdm3a) (Mus musculus (Mouse)).